Reading from the N-terminus, the 516-residue chain is Cysteine--tRNA ligase (516 aa).

C34 serves as a coordination point for Zn(2+). Positions 36–46 (PTVYNFAHLGN) match the 'HIGH' region motif. Residues C225, H250, and E254 each contribute to the Zn(2+) site. A 'KMSKS' region motif is present at residues 285–289 (KMSKS). Position 288 (K288) interacts with ATP.

Belongs to the class-I aminoacyl-tRNA synthetase family. As to quaternary structure, monomer. Requires Zn(2+) as cofactor.

It is found in the cytoplasm. The catalysed reaction is tRNA(Cys) + L-cysteine + ATP = L-cysteinyl-tRNA(Cys) + AMP + diphosphate. The chain is Cysteine--tRNA ligase from Zymomonas mobilis subsp. mobilis (strain ATCC 31821 / ZM4 / CP4).